Consider the following 299-residue polypeptide: Superkiller complex protein 8 (299 aa).

WD repeat units follow at residues 11–48 (AHEDGIWCVKWQGDIIATGGMGTKVKTWHGNQPQFLTE), 54–93 (KHILGVTSLDIDIGARYLATGGMDGTVRLFDLSTNTLHKT), 96–135 (SGPLGCLKIGFLNSANNLVSVSESGNISIYSVETGEKLRS), 138–177 (NTNKQVLTMAISPNNEQIAVAGLDGTVLCYDVESGRRVSE), 180–219 (AHGVPIRSLCFSSDSKTIFTGAEDSQIRLHDPNSSNPYIA), 223–263 (GHSS…LDSS), and 266–299 (AHADQTWDLAFSPDSTKLVSVSDDCSIHSYALKQ).

It belongs to the SKI8 family.

The polypeptide is Superkiller complex protein 8 (skic8) (Dictyostelium discoideum (Social amoeba)).